The primary structure comprises 279 residues: Elongation factor Ts (279 aa).

The involved in Mg(2+) ion dislocation from EF-Tu stretch occupies residues 80-83 (TDFV).

Belongs to the EF-Ts family.

Its subcellular location is the cytoplasm. Its function is as follows. Associates with the EF-Tu.GDP complex and induces the exchange of GDP to GTP. It remains bound to the aminoacyl-tRNA.EF-Tu.GTP complex up to the GTP hydrolysis stage on the ribosome. This Borrelia garinii subsp. bavariensis (strain ATCC BAA-2496 / DSM 23469 / PBi) (Borreliella bavariensis) protein is Elongation factor Ts.